A 418-amino-acid chain; its full sequence is MAGRLPACVIDVGTGYSKLGFAGNKEPQFIIPSAIAIKESARVGDTNTRRITKGIEDLDFFIGDEAFDATGYSIKYPVRHGLVEDWDLMERFLEQCVFKYLRAEPEDHYFLLTEPPLNTPENREYTAEIMFETFNVPGLYIAVQAVLALAASWASRSAEERTLTGIVVDSGDGVTHVIPVAEGYVIGSCIKHIPIAGRNITSFIQSLLREREVGIPPEQSLETAKAIKEKHCYICPDIAKEFAKYDTEPGKWIRNFSGVNTVTKAPFNVDVGYERFLGPEIFFHPEFSNPDFTIPLSEIVDNVIQNCPIDVRRPLYNNIVLSGGSTMFKDFGRRLQRDIKRSVDTRLRISENLSEGRIKPKPIDVQVITHHMQRYAVWFGGSMLASTPEFYQVCHTKAAYEEYGPSICRHNPVFGTMT.

It belongs to the actin family. ARP3 subfamily. Component of the Arp2/3 complex.

Its subcellular location is the cytoplasm. It is found in the cytoskeleton. In terms of biological role, functions as ATP-binding component of the Arp2/3 complex which is involved in regulation of actin polymerization and together with an activating nucleation-promoting factor (NPF) mediates the formation of branched actin networks. Seems to contact the pointed end of the daughter actin filament. Required during embryogenesis for the developmental migration of tail hemocytes anteriorly, along the ventral midline. In Drosophila melanogaster (Fruit fly), this protein is Actin-related protein 3.